Consider the following 411-residue polypeptide: D-ribitol-5-phosphate cytidylyltransferase (411 aa).

The protein belongs to the IspD/TarI cytidylyltransferase family. IspD subfamily. In terms of assembly, homodimer.

It localises to the cytoplasm. It is found in the cytosol. It carries out the reaction D-ribitol 5-phosphate + CTP + H(+) = CDP-L-ribitol + diphosphate. It catalyses the reaction D-ribose 5-phosphate + CTP + H(+) = CDP-D-ribose + diphosphate. The enzyme catalyses D-ribulose 5-phosphate + CTP + H(+) = CDP-D-ribulose + diphosphate. It functions in the pathway protein modification; protein glycosylation. In terms of biological role, cytidylyltransferase required for protein O-linked mannosylation. Catalyzes the formation of CDP-ribitol nucleotide sugar from D-ribitol 5-phosphate. CDP-ribitol is a substrate of FKTN during the biosynthesis of the phosphorylated O-mannosyl trisaccharide (N-acetylgalactosamine-beta-3-N-acetylglucosamine-beta-4-(phosphate-6-)mannose), a carbohydrate structure present in alpha-dystroglycan (DAG1), which is required for binding laminin G-like domain-containing extracellular proteins with high affinity. Shows activity toward other pentose phosphate sugars and mediates formation of CDP-ribulose or CDP-ribose using CTP and ribulose-5-phosphate or ribose-5-phosphate, respectively. Not involved in dolichol production. This chain is D-ribitol-5-phosphate cytidylyltransferase (crppa), found in Xenopus tropicalis (Western clawed frog).